Consider the following 251-residue polypeptide: Segregation and condensation protein A (251 aa).

It belongs to the ScpA family. As to quaternary structure, component of a cohesin-like complex composed of ScpA, ScpB and the Smc homodimer, in which ScpA and ScpB bind to the head domain of Smc. The presence of the three proteins is required for the association of the complex with DNA.

Its subcellular location is the cytoplasm. In terms of biological role, participates in chromosomal partition during cell division. May act via the formation of a condensin-like complex containing Smc and ScpB that pull DNA away from mid-cell into both cell halves. This Bacillus licheniformis (strain ATCC 14580 / DSM 13 / JCM 2505 / CCUG 7422 / NBRC 12200 / NCIMB 9375 / NCTC 10341 / NRRL NRS-1264 / Gibson 46) protein is Segregation and condensation protein A.